The following is a 384-amino-acid chain: Chaperone protein DnaJ (384 aa).

In terms of domain architecture, J spans 5–70; sequence DYYEVLGVAR…QKKAAYDRFG (66 aa). A CR-type zinc finger spans residues 138–216; that stretch reads GAQKTINVPG…CRGAGRVQKE (79 aa). Zn(2+) is bound by residues cysteine 151, cysteine 154, cysteine 168, cysteine 171, cysteine 190, cysteine 193, cysteine 204, and cysteine 207. CXXCXGXG motif repeat units lie at residues 151–158, 168–175, 190–197, and 204–211; these read CAACNGTG, CPTCSGMG, CPTCSGHG, and CQECRGAG. A disordered region spans residues 300 to 322; sequence KVPPGTQSGKQLRLRGKGMPPLR.

The protein belongs to the DnaJ family. Homodimer. Zn(2+) is required as a cofactor.

It localises to the cytoplasm. Participates actively in the response to hyperosmotic and heat shock by preventing the aggregation of stress-denatured proteins and by disaggregating proteins, also in an autonomous, DnaK-independent fashion. Unfolded proteins bind initially to DnaJ; upon interaction with the DnaJ-bound protein, DnaK hydrolyzes its bound ATP, resulting in the formation of a stable complex. GrpE releases ADP from DnaK; ATP binding to DnaK triggers the release of the substrate protein, thus completing the reaction cycle. Several rounds of ATP-dependent interactions between DnaJ, DnaK and GrpE are required for fully efficient folding. Also involved, together with DnaK and GrpE, in the DNA replication of plasmids through activation of initiation proteins. The chain is Chaperone protein DnaJ from Paracoccus denitrificans (strain Pd 1222).